The primary structure comprises 598 residues: Serine/threonine-protein kinase cot-1 (598 aa).

Composition is skewed to polar residues over residues 1-16, 24-33, and 99-126; these read MDNTNRPHLNLGTNDT, TYPTTPSTFP, and PRTSGNSGQQQTYGNYLSAPMPSNTQTE. Disordered regions lie at residues 1–46, 80–148, and 163–190; these read MDNT…GGSQ, GSAG…NQKK, and RARERNQRQSEMEQKLGETNDARRRESI. The Protein kinase domain maps to 214–518; the sequence is YQTIKIIGKG…AHEIKSHAFF (305 aa). Residues 220-228 and lysine 243 each bind ATP; that span reads IGKGAFGEV. Residue aspartate 337 is the Proton acceptor of the active site. The AGC-kinase C-terminal domain maps to 519 to 598; the sequence is RGVEFDSLRR…TFKRFDNNFR (80 aa).

It belongs to the protein kinase superfamily. STE Ser/Thr protein kinase family. COT1 subfamily.

It catalyses the reaction L-seryl-[protein] + ATP = O-phospho-L-seryl-[protein] + ADP + H(+). It carries out the reaction L-threonyl-[protein] + ATP = O-phospho-L-threonyl-[protein] + ADP + H(+). Protein kinase required for hyphal elongation. The protein is Serine/threonine-protein kinase cot-1 (cot-1) of Neurospora crassa (strain ATCC 24698 / 74-OR23-1A / CBS 708.71 / DSM 1257 / FGSC 987).